A 116-amino-acid polypeptide reads, in one-letter code: Large ribosomal subunit protein bL17 (116 aa).

Belongs to the bacterial ribosomal protein bL17 family. Part of the 50S ribosomal subunit. Contacts protein L32.

The protein is Large ribosomal subunit protein bL17 of Trichormus variabilis (strain ATCC 29413 / PCC 7937) (Anabaena variabilis).